Here is a 513-residue protein sequence, read N- to C-terminus: ATP synthase subunit alpha (513 aa).

169–176 is an ATP binding site; the sequence is GDRQTGKT.

It belongs to the ATPase alpha/beta chains family. As to quaternary structure, F-type ATPases have 2 components, CF(1) - the catalytic core - and CF(0) - the membrane proton channel. CF(1) has five subunits: alpha(3), beta(3), gamma(1), delta(1), epsilon(1). CF(0) has three main subunits: a(1), b(2) and c(9-12). The alpha and beta chains form an alternating ring which encloses part of the gamma chain. CF(1) is attached to CF(0) by a central stalk formed by the gamma and epsilon chains, while a peripheral stalk is formed by the delta and b chains.

Its subcellular location is the cell inner membrane. It carries out the reaction ATP + H2O + 4 H(+)(in) = ADP + phosphate + 5 H(+)(out). Its function is as follows. Produces ATP from ADP in the presence of a proton gradient across the membrane. The alpha chain is a regulatory subunit. The polypeptide is ATP synthase subunit alpha (Bordetella petrii (strain ATCC BAA-461 / DSM 12804 / CCUG 43448)).